A 330-amino-acid chain; its full sequence is Aspartate--ammonia ligase (330 aa).

This sequence belongs to the class-II aminoacyl-tRNA synthetase family. AsnA subfamily.

It localises to the cytoplasm. It carries out the reaction L-aspartate + NH4(+) + ATP = L-asparagine + AMP + diphosphate + H(+). It functions in the pathway amino-acid biosynthesis; L-asparagine biosynthesis; L-asparagine from L-aspartate (ammonia route): step 1/1. This is Aspartate--ammonia ligase from Edwardsiella ictaluri (strain 93-146).